The following is a 610-amino-acid chain: Elongation factor 4 (610 aa).

Positions 11-193 constitute a tr-type G domain; the sequence is EKIRNFSIIA…QIVEKVPAPT (183 aa). Residues 23 to 28 and 140 to 143 each bind GTP; these read DHGKST and NKID.

The protein belongs to the TRAFAC class translation factor GTPase superfamily. Classic translation factor GTPase family. LepA subfamily.

It localises to the cell membrane. It catalyses the reaction GTP + H2O = GDP + phosphate + H(+). Its function is as follows. Required for accurate and efficient protein synthesis under certain stress conditions. May act as a fidelity factor of the translation reaction, by catalyzing a one-codon backward translocation of tRNAs on improperly translocated ribosomes. Back-translocation proceeds from a post-translocation (POST) complex to a pre-translocation (PRE) complex, thus giving elongation factor G a second chance to translocate the tRNAs correctly. Binds to ribosomes in a GTP-dependent manner. The protein is Elongation factor 4 of Streptococcus suis (strain 98HAH33).